Here is a 145-residue protein sequence, read N- to C-terminus: Fatty acid-binding protein homolog 4 (145 aa).

It belongs to the calycin superfamily. Fatty-acid binding protein (FABP) family.

In Caenorhabditis elegans, this protein is Fatty acid-binding protein homolog 4 (lbp-4).